Here is a 35-residue protein sequence, read N- to C-terminus: Natriuretic peptide TNPa (35 aa).

C9 and C25 are joined by a disulfide.

Expressed by the venom gland.

The protein localises to the secreted. Snake venom natriuretic peptide that exhibits vasoactive and probable hypotensive activity. Is only weakly active on natriuretic peptide receptor-C (NPR3). Stimulates cGMP production through the natriuretic peptide receptor 1 (NPR1) with moderate potencies for the rat NPR1 (EC(50)=2020 nM), and very weak potencies over human NPR1 (15% activation at 10 uM). In vivo, does not impact systolic and diastolic blood pressure, as well as heart rate, when intravenously injected in conscious rabbits. Does not affect the bradycardia due to cardiac afferent stimulation (Bezold-Jarisch reflex). The protein is Natriuretic peptide TNPa of Oxyuranus microlepidotus (Inland taipan).